The sequence spans 381 residues: MFEMYIESGMNKLRCGYTTGSCATGAAKAATMLLFDLINSEEELNEIEIDTPKGIKVEMPIDNVVVGKNFVQCTILKFSGDDKDITMGLEIQARVEKIRKEEAEGLSKKLISNESKTIVLDGGIGVGRVTKDGLFVAKGEPAINPVPRQMIIKEIESILPKDKYVKVVISVPQGTEIGKKTFNPRLGIEGGISILGTSGIVYPMSEDALKASIKLEIKQKSLKSKNLILTFGNLGENYCKYLGYKEEEIVICSNFIGFALECCVSCNVKSIIIVGHIGKMSKIAYGCFNTHSRVCGVRLEVLALELTLLGYDISLVNKVLNEKTCEGAVKLLGSGYENLYENIGQKILNSMKTYVYDELKIDAVMYYGASNPILLWSSCLE.

It belongs to the CbiD family.

The catalysed reaction is Co-precorrin-5B + S-adenosyl-L-methionine = Co-precorrin-6A + S-adenosyl-L-homocysteine. The protein operates within cofactor biosynthesis; adenosylcobalamin biosynthesis; cob(II)yrinate a,c-diamide from sirohydrochlorin (anaerobic route): step 6/10. Its function is as follows. Catalyzes the methylation of C-1 in cobalt-precorrin-5B to form cobalt-precorrin-6A. This Clostridium botulinum (strain Alaska E43 / Type E3) protein is Cobalt-precorrin-5B C(1)-methyltransferase.